Consider the following 313-residue polypeptide: Ribonuclease Z (313 aa).

Residues His63, His65, Asp67, His68, His142, Asp212, and His270 each contribute to the Zn(2+) site. Residue Asp67 is the Proton acceptor of the active site.

It belongs to the RNase Z family. As to quaternary structure, homodimer. The cofactor is Zn(2+).

It catalyses the reaction Endonucleolytic cleavage of RNA, removing extra 3' nucleotides from tRNA precursor, generating 3' termini of tRNAs. A 3'-hydroxy group is left at the tRNA terminus and a 5'-phosphoryl group is left at the trailer molecule.. Zinc phosphodiesterase, which displays some tRNA 3'-processing endonuclease activity. Probably involved in tRNA maturation, by removing a 3'-trailer from precursor tRNA. This is Ribonuclease Z from Enterococcus faecalis (strain ATCC 700802 / V583).